Consider the following 346-residue polypeptide: Acrosin (346 aa).

Positions 1-19 are cleaved as a signal peptide; that stretch reads MALLLPLAVLLAACRPGHG. Disulfide bonds link cysteine 24–cysteine 146, cysteine 27–cysteine 154, cysteine 70–cysteine 86, cysteine 168–cysteine 240, cysteine 203–cysteine 219, and cysteine 230–cysteine 260. Residues 41–284 form the Peptidase S1 domain; sequence VVGGTEALHG…FYNWILLQVR (244 aa). Histidine 85 acts as the Charge relay system in catalysis. Asparagine 128 is a glycosylation site (N-linked (GlcNAc...) asparagine). The active-site Charge relay system is aspartate 134. Asparagine 204 carries an N-linked (GlcNAc...) asparagine glycan. The active-site Charge relay system is serine 234. A propeptide spanning residues 266-346 is cleaved from the precursor; the sequence is PGIYTSTQHF…LLQSLWGSKA (81 aa).

This sequence belongs to the peptidase S1 family. In terms of assembly, heavy chain (catalytic) and a light chain linked by two disulfide bonds. In terms of processing, glycosylated.

It carries out the reaction Preferential cleavage: Arg-|-Xaa, Lys-|-Xaa.. Its activity is regulated as follows. Inhibited by aprotinin, ovomucoid, soybean trypsin inhibitor, benzamidine, p-aminobenzamidine, and zinc ions. Activity also inhibited by a Kazal-type proteinase inhibitor. Its function is as follows. Serine protease of trypsin-like cleavage specificity. Synthesized in a zymogen form, proacrosin and stored in the acrosome. This Meleagris gallopavo (Wild turkey) protein is Acrosin.